Consider the following 263-residue polypeptide: 3-methyl-2-oxobutanoate hydroxymethyltransferase (263 aa).

Mg(2+) contacts are provided by Asp-46 and Asp-85. 3-methyl-2-oxobutanoate contacts are provided by residues Asp-46 to Ser-47, Asp-85, and Lys-115. Residue Glu-117 coordinates Mg(2+). Glu-180 acts as the Proton acceptor in catalysis.

This sequence belongs to the PanB family. As to quaternary structure, homodecamer; pentamer of dimers. Mg(2+) is required as a cofactor.

Its subcellular location is the cytoplasm. It carries out the reaction 3-methyl-2-oxobutanoate + (6R)-5,10-methylene-5,6,7,8-tetrahydrofolate + H2O = 2-dehydropantoate + (6S)-5,6,7,8-tetrahydrofolate. It functions in the pathway cofactor biosynthesis; (R)-pantothenate biosynthesis; (R)-pantoate from 3-methyl-2-oxobutanoate: step 1/2. In terms of biological role, catalyzes the reversible reaction in which hydroxymethyl group from 5,10-methylenetetrahydrofolate is transferred onto alpha-ketoisovalerate to form ketopantoate. The protein is 3-methyl-2-oxobutanoate hydroxymethyltransferase of Corynebacterium diphtheriae (strain ATCC 700971 / NCTC 13129 / Biotype gravis).